We begin with the raw amino-acid sequence, 91 residues long: Small ribosomal subunit protein uS19 (91 aa).

It belongs to the universal ribosomal protein uS19 family.

Its function is as follows. Protein S19 forms a complex with S13 that binds strongly to the 16S ribosomal RNA. The polypeptide is Small ribosomal subunit protein uS19 (Ectopseudomonas mendocina (strain ymp) (Pseudomonas mendocina)).